The chain runs to 317 residues: Malate dehydrogenase (317 aa).

Residues G7–G13 and D34 each bind NAD(+). Residues R81 and R87 each contribute to the substrate site. Residues N94 and V117–N119 each bind NAD(+). Substrate contacts are provided by N119 and R153. H177 (proton acceptor) is an active-site residue. Residue M231 coordinates NAD(+).

Belongs to the LDH/MDH superfamily. MDH type 1 family. In terms of assembly, homodimer.

It catalyses the reaction (S)-malate + NAD(+) = oxaloacetate + NADH + H(+). Functionally, catalyzes the reversible oxidation of malate to oxaloacetate. This is Malate dehydrogenase from Actinobacillus pleuropneumoniae serotype 5b (strain L20).